The sequence spans 361 residues: Adenosine kinase (361 aa).

Residues Pro-7–Glu-15 carry the Nuclear localization signal motif. Asp-34 is a binding site for adenosine. Position 48 (Ser-48) interacts with Mg(2+). Phosphotyrosine is present on Tyr-76. Position 147 (Asn-147) interacts with Mg(2+). Position 305 (Gln-305) interacts with adenosine. Residue Asp-316 is part of the active site. Asp-316 serves as the catalytic Proton acceptor.

It belongs to the carbohydrate kinase PfkB family. Monomer. It depends on Mg(2+) as a cofactor. As to expression, widely expressed. Highly expressed in liver, testis, kidney and spleen (at protein level). In brain, expression in most forebrain structures and the cerebellum is higher than in the midbrain and brainstem (at protein level). Major isoform in testis and kidney. Not detected in most brain regions, except in the cerebellum, where it is expressed at a similar level to that of isoform 2 (at protein level). In terms of tissue distribution, major isoform in spleen and in most brain regions, except in the cerebellum, where it is expressed at a similar level to that of isoform 1 (at protein level).

The protein localises to the nucleus. The protein resides in the cytoplasm. It catalyses the reaction adenosine + ATP = AMP + ADP + H(+). Its pathway is purine metabolism; AMP biosynthesis via salvage pathway; AMP from adenosine: step 1/1. Activity is inhibited by 5-iodotubercidin and 5'-amino-5'-deoxyadenosine. In terms of biological role, catalyzes the phosphorylation of the purine nucleoside adenosine at the 5' position in an ATP-dependent manner. Serves as a potential regulator of concentrations of extracellular adenosine and intracellular adenine nucleotides. The sequence is that of Adenosine kinase (Adk) from Mus musculus (Mouse).